An 824-amino-acid polypeptide reads, in one-letter code: MTTELEIDDRKEEEAQIPGETSESEEGDEPVKMNRVKRACAMAAESLKEAKRIKNMLMEEECVLQLGNCKKTASYGHRLSKTEACCPSCFSVAFRGKDYENEFTIWKQKAMDGQTHVRSEQFVKRYVNSCFLPYYAKCHQCSKYSKLITSDSLSAQQLSDFKCDCASTIESPKIERVREDSEWCFNEFGHPPLLQNNISYDLLVDHYVTRTTGMDATCQEKAALIDNGGIEFRDTRRIMNMFYVPFTDVIANIVHPEFMETDEKFAFPKFADDPISIYYLQVRNTIIAMWLKHPFVELTVKMIEPQIIVRGHARIFFIEHLIHPILEFLTIKGVVNYGAFDFRIDPLNGMRPKIAIIGAGISGISTARHLKHLGIDAVLFEAKDRFGGRMMDDQSLGVSVGKGAQIIVGNINNPITLLCEQIGIKYRNSNFFCPLIDENGRCFTLERKELDDQVDLHYNNVLDAIRNKYQSDRNFPDVPLEVTNFRHFTEMFSKMSSGLLSAADLDSLYTPEFEKLLDFHLGNLEFSCGTHVSNLSAKDYDHNEKFGNFAGEHAVITDGAQRIIDFLATGLDIRLNCPVKCIDWGRDDRKVKIFFENAEQAAEEFDKVVITTSLSVLKSNHSKMFVPPLPIEKQKAIDDLGAGLIEKIAVKFDRRFWDTVDADGLRTEYFGKVSDCKTDRSLFNIFYDFSGKDPNGEDTFVLMSYVTAEHVNLVNVLTESEVADKFCATLRKMFPSAVINPLGHMMSHWGADRFVGMSYTFVPFGSDGDATYNQLKKSIDEKLYFAGEHTIAAEPQTMAGAYISGLREAGQIVMSLKRDSATFE.

Residues 1 to 31 (MTTELEIDDRKEEEAQIPGETSESEEGDEPV) are disordered. The 102-residue stretch at 245 to 346 (PFTDVIANIV…YGAFDFRIDP (102 aa)) folds into the SWIRM domain. Residues 352 to 407 (PKIA…AQII), Val579, Glu788, and 796 to 798 (QTM) contribute to the FAD site.

Belongs to the flavin monoamine oxidase family. The cofactor is FAD. In hermaphrodites, expressed in gut cells, embryonic cells and sheath cells. Not expressed in sperm or pharyngeal neurons.

It localises to the nucleus. It carries out the reaction N(6),N(6)-dimethyl-L-lysyl(4)-[histone H3] + 2 A + 2 H2O = L-lysyl(4)-[histone H3] + 2 formaldehyde + 2 AH2. Functionally, histone demethylase that demethylates di-methylated 'Lys-4' of histone H3, a specific tag for epigenetic transcriptional activation, thereby acting as a corepressor. Acts by oxidizing the substrate by FAD to generate the corresponding imine that is subsequently hydrolyzed. Plays a role in the mitotic development of the germline. May be involved in H3 demethylation in mitotic cells including gut and embryonic cells. Plays a role in sensitivity upon interstrand cross-link DNA damage, probably by positively regulating the expression of mlh-1. Plays a role in developmental growth and lifespan regulation in response to ultraviolet-induced damage. No obvious role in larval development, sex chromosome segregation or for regulating meiotic crossover frequency. This is Lysine-specific histone demethylase 1B homolog from Caenorhabditis elegans.